The primary structure comprises 284 residues: tRNA N(3)-cytidine methyltransferase METTL6 (284 aa).

Positions 45 and 49 each coordinate S-adenosyl-L-methionine. Residues Y49, H61, E85, G87, D110, D136, L137, and I157 each contribute to the S-adenosyl-L-homocysteine site. S-adenosyl-L-methionine-binding residues include G87, D110, D136, L137, and I157.

The protein belongs to the methyltransferase superfamily. METL family. Monomer. Interacts with SARS1/SerRS; interaction is mediated via tRNA(Ser) and is required for N(3)-methylcytidine methylation.

The protein localises to the cytoplasm. The protein resides in the nucleus. It catalyses the reaction cytidine(32) in tRNA(Ser) + S-adenosyl-L-methionine = N(3)-methylcytidine(32) in tRNA(Ser) + S-adenosyl-L-homocysteine + H(+). Functionally, S-adenosyl-L-methionine-dependent methyltransferase that mediates N(3)-methylcytidine modification of residue 32 of the tRNA anticodon loop of tRNA(Ser), including tRNA(Ser)(UGA) and tRNA(Ser)(GCU). Interaction with SARS1/SerRS is required for N(3)-methylcytidine methylation. This Homo sapiens (Human) protein is tRNA N(3)-cytidine methyltransferase METTL6.